The primary structure comprises 273 residues: Small ribosomal subunit protein uS2 (273 aa).

It belongs to the universal ribosomal protein uS2 family.

The chain is Small ribosomal subunit protein uS2 from Mycolicibacterium vanbaalenii (strain DSM 7251 / JCM 13017 / BCRC 16820 / KCTC 9966 / NRRL B-24157 / PYR-1) (Mycobacterium vanbaalenii).